Consider the following 213-residue polypeptide: Pyridoxine/pyridoxamine 5'-phosphate oxidase (213 aa).

Substrate is bound by residues 9–12 (RLEY) and lysine 67. FMN contacts are provided by residues 62–67 (RIVLLK), 77–78 (YT), arginine 83, lysine 84, and glutamine 106. The substrate site is built by tyrosine 124, arginine 128, and serine 132. FMN contacts are provided by residues 141 to 142 (QS) and tryptophan 185. 191–193 (RLH) contacts substrate. Arginine 195 serves as a coordination point for FMN.

Belongs to the pyridoxamine 5'-phosphate oxidase family. In terms of assembly, homodimer. The cofactor is FMN.

It carries out the reaction pyridoxamine 5'-phosphate + O2 + H2O = pyridoxal 5'-phosphate + H2O2 + NH4(+). The catalysed reaction is pyridoxine 5'-phosphate + O2 = pyridoxal 5'-phosphate + H2O2. It participates in cofactor metabolism; pyridoxal 5'-phosphate salvage; pyridoxal 5'-phosphate from pyridoxamine 5'-phosphate: step 1/1. It functions in the pathway cofactor metabolism; pyridoxal 5'-phosphate salvage; pyridoxal 5'-phosphate from pyridoxine 5'-phosphate: step 1/1. Functionally, catalyzes the oxidation of either pyridoxine 5'-phosphate (PNP) or pyridoxamine 5'-phosphate (PMP) into pyridoxal 5'-phosphate (PLP). This is Pyridoxine/pyridoxamine 5'-phosphate oxidase from Chromobacterium violaceum (strain ATCC 12472 / DSM 30191 / JCM 1249 / CCUG 213 / NBRC 12614 / NCIMB 9131 / NCTC 9757 / MK).